Here is a 646-residue protein sequence, read N- to C-terminus: Esterase EstA (646 aa).

Residues 1-24 (MIRMALKPLVAACLLASLSTAPQA) form the signal peptide. Residues 25 to 397 (APSPYSTLVV…DSAASGDGNG (373 aa)) are Extracellular-facing. The Nucleophile role is filled by serine 38. Active-site residues include aspartate 310 and histidine 313. In terms of domain architecture, Autotransporter spans 366 to 646 (QNVGQWRGFV…SVSLALSLDF (281 aa)). A beta stranded membrane pass occupies residues 398 to 408 (YNLTLGGSYRI). Residues 409-410 (DE) are Periplasmic-facing. The chain crosses the membrane as a beta stranded span at residues 411–421 (AWRAGVAAGFY). Over 422 to 437 (RQKLEAGAKDSDYRMN) the chain is Extracellular. Residues 438–447 (SYMASAFVQY) traverse the membrane as a beta stranded segment. Over 448–451 (QENR) the chain is Periplasmic. The chain crosses the membrane as a beta stranded span at residues 452–461 (WWADAALTGG). Over 462–488 (YLDYDDLKRKFALGGGERSEKGDTNGH) the chain is Extracellular. The beta stranded transmembrane segment at 489–500 (LWAFSARLGYDI) threads the bilayer. The Periplasmic segment spans residues 501-507 (AQQADSP). A beta stranded transmembrane segment spans residues 508-518 (WHLSPFVSADY). Topologically, residues 519–547 (ARVEVDGYSEKGASATALDYDDQKRSSKR) are extracellular. A beta stranded transmembrane segment spans residues 548–558 (LGAGLQGKYAF). Residues 559-561 (GSD) lie on the Periplasmic side of the membrane. A beta stranded membrane pass occupies residues 562-571 (TQLFAEYAHE). The Extracellular portion of the chain corresponds to 572–605 (REYEDDTQDLTMSLNSLPGNRFTLEGYTPQDHLN). Residues 606–615 (RVSLGFSQKL) form a beta stranded membrane-spanning segment. Residues 616-618 (APE) are Periplasmic-facing. Residues 619 to 628 (LSLRGGYNWR) form a beta stranded membrane-spanning segment. The Extracellular segment spans residues 629-636 (KGEDDTQQ). A beta stranded membrane pass occupies residues 637 to 646 (SVSLALSLDF).

Belongs to the 'GDSL' lipolytic enzyme family.

The protein localises to the cell outer membrane. The catalysed reaction is a carboxylic ester + H2O = an alcohol + a carboxylate + H(+). Functionally, esterase whose enzymatic activity is required for rhamnolipid production, all kinds of cell motility (swimming, swarming, and twitching), and biofilm formation; the exact role of EstA in these processes is unclear. In vitro, has pronounced esterase activities towards p-nitrophenyl esters of short acyl chain length (C4-C6) and Tween detergents. Also shows relatively high activity towards beta-naphthyl butyrate, whereas its activities towards triacylglycerols and acyls-CoA are negligible. The protein is Esterase EstA (estA) of Pseudomonas aeruginosa (strain ATCC 15692 / DSM 22644 / CIP 104116 / JCM 14847 / LMG 12228 / 1C / PRS 101 / PAO1).